We begin with the raw amino-acid sequence, 294 residues long: Ankyrin repeat and SOCS box protein 9 (294 aa).

An N-acetylmethionine modification is found at M1. 6 ANK repeats span residues 35–64 (SDWS…AVNI), 68–97 (DHVS…QVNG), 101–130 (DWHT…SVQP), 133–162 (DLAS…NIDH), 166–195 (HLGT…DVNQ), and 198–227 (GQDS…DTQA). Residue S51 is modified to Phosphoserine. An SOCS box domain is found at 240–294 (PPESPLAQLFLEREGPPSLMQLCRLRIRKCFGIQQHHKITKLVLPEDLKQFLLHL).

The protein belongs to the ankyrin SOCS box (ASB) family. As to quaternary structure, substrate-recognition component of the ECS(ASB9) complex, composed of ASB9, CUL5, ELOB, ELOC and RNF7/RBX2. In terms of tissue distribution, predominantly expressed in testis, kidney, and liver.

The protein resides in the mitochondrion. It functions in the pathway protein modification; protein ubiquitination. Functionally, substrate-recognition component of a cullin-5-RING E3 ubiquitin-protein ligase complex (ECS complex, also named CRL5 complex), which mediates the ubiquitination and subsequent proteasomal degradation of target proteins. The ECS(ASB9) complex catalyzes ubiquitination of creatine kinases CKB and CKMT1A. In terms of biological role, does not interact with the Elongin BC complex, likely to be a negative regulator of isoform 1. This Homo sapiens (Human) protein is Ankyrin repeat and SOCS box protein 9.